The primary structure comprises 351 residues: Histidinol-phosphate aminotransferase (351 aa).

K214 is subject to N6-(pyridoxal phosphate)lysine.

The protein belongs to the class-II pyridoxal-phosphate-dependent aminotransferase family. Histidinol-phosphate aminotransferase subfamily. Pyridoxal 5'-phosphate serves as cofactor.

The enzyme catalyses L-histidinol phosphate + 2-oxoglutarate = 3-(imidazol-4-yl)-2-oxopropyl phosphate + L-glutamate. Its pathway is amino-acid biosynthesis; L-histidine biosynthesis; L-histidine from 5-phospho-alpha-D-ribose 1-diphosphate: step 7/9. The protein is Histidinol-phosphate aminotransferase of Methanosphaerula palustris (strain ATCC BAA-1556 / DSM 19958 / E1-9c).